The sequence spans 454 residues: DNA-binding protein (454 aa).

Residues 1–41 (MSHKKVVAISESSSDEEVPVAPPTAPPKKRQRKAVEEPRGH) form a disordered region. At Tyr129 the chain carries Phosphotyrosine; by host. Residues Cys213 and His215 each coordinate Zn(2+). The segment at 226-260 (VEMDVNSENAQRALKENPEKTKIVSNRWGRNVVQF) is flexible loop. The Zn(2+) site is built by Cys268, Cys284, Cys325, Cys327, Cys378, and Cys394. Residues 440-454 (TILPQGQHDDDLVLF) form a C-terminal arm, DBP binding region.

It belongs to the adenoviridae E2A DNA-binding protein family. In terms of assembly, homomultimerizes on viral ssDNA bound to pTP. Forms a initiation complex with viral polymerase, pTP and hosts NFIA and POU2F1/OCT1. Interacts with host SRCAP.

It is found in the host nucleus. Functionally, plays a role in the elongation phase of viral strand displacement replication by unwinding the template in an ATP-independent fashion, employing its capacity to form multimers. Also enhances the rate of initiation. Released from template upon second strand synthesis. Assembles in complex with viral pTP, viral pol, host NFIA and host POU2F1/OCT1 on viral origin of replication. Covers the whole ssDNA genome during synthesis. The complementary strand synthesis induces its relese from DNA template. May inhibit cellular transcription mediated by the interaction between host SRCAP and CBP. The protein is DNA-binding protein of Canine adenovirus serotype 1 (strain RI261) (CAdV-1).